A 203-amino-acid chain; its full sequence is NADH dehydrogenase [ubiquinone] 1 alpha subcomplex assembly factor 4 (203 aa).

This sequence belongs to the NDUFAF4 family. In terms of assembly, together with NdufAF3 associates with mitochondrial complex I assembly intermediates during its biogenesis.

In terms of biological role, involved in the assembly of mitochondrial NADH:ubiquinone oxidoreductase complex (complex I). Together with NdufAF3, involved in biogenesis of complex 1 modules N, Q and P-peripheral, but not the P-distal module. Required for recruitment of the complex I assembly factor Timmdc1 to complex 1 assembly intermediates. The protein is NADH dehydrogenase [ubiquinone] 1 alpha subcomplex assembly factor 4 of Drosophila melanogaster (Fruit fly).